The primary structure comprises 693 residues: Polyphosphate kinase (693 aa).

ATP is bound at residue asparagine 57. Residues arginine 383 and arginine 413 each coordinate Mg(2+). Catalysis depends on histidine 443, which acts as the Phosphohistidine intermediate. 3 residues coordinate ATP: tyrosine 476, arginine 572, and histidine 601.

It belongs to the polyphosphate kinase 1 (PPK1) family. The cofactor is Mg(2+). An intermediate of this reaction is the autophosphorylated ppk in which a phosphate is covalently linked to a histidine residue through a N-P bond.

The enzyme catalyses [phosphate](n) + ATP = [phosphate](n+1) + ADP. Its function is as follows. Catalyzes the reversible transfer of the terminal phosphate of ATP to form a long-chain polyphosphate (polyP). The chain is Polyphosphate kinase from Acinetobacter baumannii (strain ATCC 17978 / DSM 105126 / CIP 53.77 / LMG 1025 / NCDC KC755 / 5377).